We begin with the raw amino-acid sequence, 302 residues long: Sulfate adenylyltransferase subunit 2 (302 aa).

The protein belongs to the PAPS reductase family. CysD subfamily. Heterodimer composed of CysD, the smaller subunit, and CysN.

The enzyme catalyses sulfate + ATP + H(+) = adenosine 5'-phosphosulfate + diphosphate. Its pathway is sulfur metabolism; hydrogen sulfide biosynthesis; sulfite from sulfate: step 1/3. Its function is as follows. With CysN forms the ATP sulfurylase (ATPS) that catalyzes the adenylation of sulfate producing adenosine 5'-phosphosulfate (APS) and diphosphate, the first enzymatic step in sulfur assimilation pathway. APS synthesis involves the formation of a high-energy phosphoric-sulfuric acid anhydride bond driven by GTP hydrolysis by CysN coupled to ATP hydrolysis by CysD. This chain is Sulfate adenylyltransferase subunit 2, found in Xanthomonas oryzae pv. oryzae (strain MAFF 311018).